The sequence spans 354 residues: UPF0496 protein At4g34330 (354 aa).

The next 2 helical transmembrane spans lie at 200-220 and 222-242; these read IIFM…ATMA and PHVA…GKWI. Residues 270–341 are a coiled coil; it reads AVQDLNNIKD…CSTDIRRART (72 aa).

This sequence belongs to the UPF0496 family.

It localises to the membrane. This Arabidopsis thaliana (Mouse-ear cress) protein is UPF0496 protein At4g34330.